Consider the following 338-residue polypeptide: tRNA N6-adenosine threonylcarbamoyltransferase (338 aa).

The Fe cation site is built by H111 and H115. Substrate-binding positions include 134–138, D167, G180, and N272; that span reads LVSGG. D300 contributes to the Fe cation binding site.

This sequence belongs to the KAE1 / TsaD family. It depends on Fe(2+) as a cofactor.

The protein localises to the cytoplasm. It catalyses the reaction L-threonylcarbamoyladenylate + adenosine(37) in tRNA = N(6)-L-threonylcarbamoyladenosine(37) in tRNA + AMP + H(+). Its function is as follows. Required for the formation of a threonylcarbamoyl group on adenosine at position 37 (t(6)A37) in tRNAs that read codons beginning with adenine. Is involved in the transfer of the threonylcarbamoyl moiety of threonylcarbamoyl-AMP (TC-AMP) to the N6 group of A37, together with TsaE and TsaB. TsaD likely plays a direct catalytic role in this reaction. The chain is tRNA N6-adenosine threonylcarbamoyltransferase from Shewanella baltica (strain OS223).